The primary structure comprises 620 residues: 1-deoxy-D-xylulose-5-phosphate synthase (620 aa).

Thiamine diphosphate is bound by residues His-80 and 121 to 123 (GHS). A Mg(2+)-binding site is contributed by Asp-152. Thiamine diphosphate-binding positions include 153-154 (GA), Asn-181, Tyr-288, and Glu-370. Asn-181 is a binding site for Mg(2+).

It belongs to the transketolase family. DXPS subfamily. In terms of assembly, homodimer. Mg(2+) is required as a cofactor. The cofactor is thiamine diphosphate.

It catalyses the reaction D-glyceraldehyde 3-phosphate + pyruvate + H(+) = 1-deoxy-D-xylulose 5-phosphate + CO2. Its pathway is metabolic intermediate biosynthesis; 1-deoxy-D-xylulose 5-phosphate biosynthesis; 1-deoxy-D-xylulose 5-phosphate from D-glyceraldehyde 3-phosphate and pyruvate: step 1/1. Its function is as follows. Catalyzes the acyloin condensation reaction between C atoms 2 and 3 of pyruvate and glyceraldehyde 3-phosphate to yield 1-deoxy-D-xylulose-5-phosphate (DXP). In Salmonella paratyphi A (strain ATCC 9150 / SARB42), this protein is 1-deoxy-D-xylulose-5-phosphate synthase.